Reading from the N-terminus, the 121-residue chain is Small ribosomal subunit protein uS13 (121 aa).

A disordered region spans residues 90–121 (RHRRGLPVRGQHTKNNARTRKGKKVSIAGRKK).

This sequence belongs to the universal ribosomal protein uS13 family. In terms of assembly, part of the 30S ribosomal subunit. Forms a loose heterodimer with protein S19. Forms two bridges to the 50S subunit in the 70S ribosome.

Located at the top of the head of the 30S subunit, it contacts several helices of the 16S rRNA. In the 70S ribosome it contacts the 23S rRNA (bridge B1a) and protein L5 of the 50S subunit (bridge B1b), connecting the 2 subunits; these bridges are implicated in subunit movement. Contacts the tRNAs in the A and P-sites. The protein is Small ribosomal subunit protein uS13 of Lactiplantibacillus plantarum (strain ATCC BAA-793 / NCIMB 8826 / WCFS1) (Lactobacillus plantarum).